Reading from the N-terminus, the 258-residue chain is Indole-3-glycerol phosphate synthase (258 aa).

It belongs to the TrpC family.

It carries out the reaction 1-(2-carboxyphenylamino)-1-deoxy-D-ribulose 5-phosphate + H(+) = (1S,2R)-1-C-(indol-3-yl)glycerol 3-phosphate + CO2 + H2O. Its pathway is amino-acid biosynthesis; L-tryptophan biosynthesis; L-tryptophan from chorismate: step 4/5. The sequence is that of Indole-3-glycerol phosphate synthase from Endomicrobium trichonymphae.